We begin with the raw amino-acid sequence, 132 residues long: Holo-[acyl-carrier-protein] synthase (132 aa).

Residues D8 and E64 each contribute to the Mg(2+) site.

This sequence belongs to the P-Pant transferase superfamily. AcpS family. The cofactor is Mg(2+).

It localises to the cytoplasm. It catalyses the reaction apo-[ACP] + CoA = holo-[ACP] + adenosine 3',5'-bisphosphate + H(+). Its function is as follows. Transfers the 4'-phosphopantetheine moiety from coenzyme A to a Ser of acyl-carrier-protein. In Shewanella sediminis (strain HAW-EB3), this protein is Holo-[acyl-carrier-protein] synthase.